The sequence spans 1368 residues: MAP3K epsilon protein kinase 1 (1368 aa).

The region spanning 20–274 (YMLGDEIGKG…AKTLLSHPWI (255 aa)) is the Protein kinase domain. 2 HEAT repeats span residues 25–62 (EIGK…EDLN) and 86–125 (SKTK…AVYI). Residues 26–34 (IGKGAYGRV) and lysine 49 contribute to the ATP site. The Proton acceptor role is filled by aspartate 144. An HEAT 3 repeat occupies 218-256 (PYYDLQPMPALFRIVQDDNPPIPDSLSPDITDFLRQCFK). Disordered stretches follow at residues 296–415 (EATA…KNTS) and 430–507 (QTSH…PVAD). Residues 351 to 364 (LGEEGTDNSEDDIM) show a composition bias toward acidic residues. 2 stretches are compositionally biased toward basic and acidic residues: residues 388-399 (SDFHGKSERGET) and 470-486 (SLHD…EGKP). Polar residues predominate over residues 488–502 (EASTSMPTSNVNQGD). HEAT repeat units lie at residues 533–571 (SNDG…LFPL), 628–653 (IPKS…DFQE), 654–695 (NACL…SSPL), 699–737 (MFIA…VFKL), and 750–788 (AAKN…RVRS). Positions 777–883 (GGLDGQAPRV…ISLSANRTST (107 aa)) are disordered. Over residues 791-808 (LDPNNPIFGQNETSSLSM) the composition is skewed to polar residues. 2 stretches are compositionally biased toward basic and acidic residues: residues 813 to 826 (DVLK…EEPS) and 836 to 852 (SDVH…DKPR). 9 HEAT repeats span residues 903-940 (EQVR…HESR), 1025-1063 (ATSS…ADTT), 1067-1105 (YMCS…DPNC), 1112-1150 (ADAI…INKR), 1154-1191 (QAAE…ASRN), 1196-1234 (LRAH…DNRK), 1258-1281 (RHFV…NKTL), 1282-1318 (AVNG…HHPR), and 1348-1368 (QVLV…NTIL).

This sequence belongs to the protein kinase superfamily. Ser/Thr protein kinase family. Interacts with SGP1. Autophosphorylated. As to expression, expressed in both the sporophytic and the gametophytic tissues, especially in dividing cells. Mostly present in flower buds and mature flowers. Also accumulates in embryos, in roots apices, trichomes and ovule integuments.

The protein resides in the cytoplasm. Its subcellular location is the cytoskeleton. The protein localises to the microtubule organizing center. It is found in the nucleus. It localises to the nucleolus. The protein resides in the cell membrane. The catalysed reaction is L-seryl-[protein] + ATP = O-phospho-L-seryl-[protein] + ADP + H(+). It carries out the reaction L-threonyl-[protein] + ATP = O-phospho-L-threonyl-[protein] + ADP + H(+). Its function is as follows. Serine/threonine-protein kinase involved in the spatial and temporal control system organizing cortical activities in mitotic and postmitotic cells. Required for the normal functioning of the plasma membrane in developing pollen. Involved in the regulation of cell expansion, cell elongation, and embryo development. This chain is MAP3K epsilon protein kinase 1, found in Arabidopsis thaliana (Mouse-ear cress).